Here is a 483-residue protein sequence, read N- to C-terminus: Regulatory protein ViaA (483 aa).

This sequence belongs to the ViaA family. In terms of assembly, homodimer. Interacts with RavA.

It is found in the cytoplasm. Functionally, component of the RavA-ViaA chaperone complex, which may act on the membrane to optimize the function of some of the respiratory chains. ViaA stimulates the ATPase activity of RavA. The protein is Regulatory protein ViaA of Salmonella schwarzengrund (strain CVM19633).